The following is a 254-amino-acid chain: MQDPEQFSIESILQRLKERFPTEADEISSFFDWDLVHKFTVFLKEKNEAGGFFSKRDSEEILDRHVLESIYHVYRITKKIGSWKGTQLGDAGTGPGIPGFFFRCLKEHPIVVLIDSQKRKLSHTENFVRSNQIDGVKFQFIRAEESKLSLNYVTSRGFIPYPYSIEAICNLLKINGTYVPFLGKHDMDTNLEKKVLSYSGFKLEFSEDLVPLEFLGMRHIKFLKKVSSPRHGYPRAWKEISKESKGANGKDRID.

Residues Gly92, 143 to 144 (AE), and Arg156 contribute to the S-adenosyl-L-methionine site.

Belongs to the methyltransferase superfamily. RNA methyltransferase RsmG family.

It localises to the cytoplasm. Its function is as follows. Specifically methylates the N7 position of a guanine in 16S rRNA. This Leptospira interrogans serogroup Icterohaemorrhagiae serovar copenhageni (strain Fiocruz L1-130) protein is Ribosomal RNA small subunit methyltransferase G.